The chain runs to 203 residues: uncharacterized protein (203 aa).

Residues 1–31 (MKKTFVKKAMLTTAAMTSAALLTFGPDAASA) form the signal peptide.

This is an uncharacterized protein from Bacillus subtilis (strain 168).